The sequence spans 141 residues: Large ribosomal subunit protein uL16 (141 aa).

Positions 1–23 (MLMPKRTKYRKQMKGRNRGKAHR) are disordered.

Belongs to the universal ribosomal protein uL16 family. In terms of assembly, part of the 50S ribosomal subunit.

In terms of biological role, binds 23S rRNA and is also seen to make contacts with the A and possibly P site tRNAs. The polypeptide is Large ribosomal subunit protein uL16 (Helicobacter acinonychis (strain Sheeba)).